The sequence spans 74 residues: Lantibiotic lichenicidin A1 (74 aa).

Residues 1–42 constitute a propeptide that is removed on maturation; that stretch reads MSKKEMILSWKNPMYRTESSYHPAGNILKELQEEEQHSIAGG. The residue at position 43 (T43) is a 2-oxobutanoic acid. The beta-methyllanthionine (Thr-Cys) cross-link spans 45–49; sequence TLSTC. 2,3-didehydroalanine (Ser) is present on S47. (Z)-2,3-didehydrobutyrine is present on T48. The lanthionine (Ser-Cys) cross-link spans 53–63; it reads SKPLGNNGYLC. 2 consecutive cross-links (beta-methyllanthionine (Thr-Cys)) follow at residues 64 to 69 and 66 to 73; these read TVTKEC and TKECMPSC.

In terms of processing, maturation of lantibiotics involves the enzymatic conversion of Thr, and Ser into dehydrated AA and the formation of thioether bonds with cysteine. This is followed by membrane translocation and cleavage of the modified precursor.

It localises to the secreted. The protein localises to the cell wall. Its function is as follows. Lanthionine-containing peptide antibiotic (lantibiotic) active on Gram-positive bacteria. The bactericidal activity of lantibiotics is based on depolarization of energized bacterial cytoplasmic membranes, initiated by the formation of aqueous transmembrane pores. When present individually, LchA1 exhibits activity towards L.lactis HP. When combined with LchA2, it displays activity towards a broad spectrum of non-pathogenic and pathogenic Gram-positive bacteria including strains of L.monocytogenes, methicillin-resistant S.aureus, S.pneumoniae and strains of vancomycin-resistant enterococci, but not towards E.faecium L4001 and BM4147-1. Combined LchA1 and LchA2 peptides also inhibit Bacillus sp. HIL-Y85/54728, L.lactis DPC3417 and B.halodurans C-125, which produce lantibiotics themselves. Inactivated by proteinase K and pronase E, but not by trypsin and chymotrypsin. The protein is Lantibiotic lichenicidin A1 of Bacillus licheniformis (strain ATCC 14580 / DSM 13 / JCM 2505 / CCUG 7422 / NBRC 12200 / NCIMB 9375 / NCTC 10341 / NRRL NRS-1264 / Gibson 46).